A 154-amino-acid chain; its full sequence is Large ribosomal subunit protein uL13 (154 aa).

This sequence belongs to the universal ribosomal protein uL13 family. In terms of assembly, part of the 50S ribosomal subunit.

In terms of biological role, this protein is one of the early assembly proteins of the 50S ribosomal subunit, although it is not seen to bind rRNA by itself. It is important during the early stages of 50S assembly. This Rhizobium etli (strain ATCC 51251 / DSM 11541 / JCM 21823 / NBRC 15573 / CFN 42) protein is Large ribosomal subunit protein uL13.